The sequence spans 662 residues: Probable quinol oxidase subunit 1 (662 aa).

The next 2 helical transmembrane spans lie at 14–34 (WMIT…IAVI) and 58–78 (LMYL…ALLL). Fe(II)-heme a is bound at residue His102. Transmembrane regions (helical) follow at residues 103-123 (GVIM…NVVV), 140-160 (ISFW…IIGG), 187-207 (VAIQ…FVTI), 228-248 (FITT…LALM), 273-293 (FFWV…FGIY), 311-331 (MVWA…HHFF), 336-356 (GALI…PTGV), and 376-396 (MLFS…GVML). Cu cation is bound by residues His279, Tyr283, His328, and His329. Residues 279–283 (HPEVY) constitute a cross-link (1'-histidyl-3'-tyrosine (His-Tyr)). His414 is a binding site for heme a3. Helical transmembrane passes span 415–435 (FHYT…IFWY), 451–471 (CFWL…ILGL), 492–512 (VIST…VVSI), 586–605 (THTG…FLIF), and 609–628 (IPAA…QSFV). His416 is a Fe(II)-heme a binding site.

It belongs to the heme-copper respiratory oxidase family. The cofactor is Cu cation. It depends on ferriheme a as a cofactor. Heme A3. serves as cofactor.

It localises to the cell membrane. It catalyses the reaction 2 a quinol + O2 = 2 a quinone + 2 H2O. The protein operates within energy metabolism; oxidative phosphorylation. Its function is as follows. Catalyzes quinol oxidation with the concomitant reduction of oxygen to water. The protein is Probable quinol oxidase subunit 1 (qoxB) of Staphylococcus haemolyticus (strain JCSC1435).